The sequence spans 379 residues: Putative acetyl-CoA C-acetyltransferase VraB (379 aa).

The Acyl-thioester intermediate role is filled by Cys86. His338 acts as the Proton acceptor in catalysis.

This sequence belongs to the thiolase-like superfamily. Thiolase family.

This chain is Putative acetyl-CoA C-acetyltransferase VraB (vraB), found in Staphylococcus aureus (strain COL).